The chain runs to 542 residues: Zinc finger CCHC domain-containing protein 7 (542 aa).

The disordered stretch occupies residues 110–144 (QAQEKTQSPATPRSNKVANKCKRSNKKPEPEESPS). Polar residues predominate over residues 112–126 (QEKTQSPATPRSNKV). Glycyl lysine isopeptide (Lys-Gly) (interchain with G-Cter in SUMO2) cross-links involve residues lysine 129 and lysine 136. Phosphoserine is present on serine 142. Glycyl lysine isopeptide (Lys-Gly) (interchain with G-Cter in SUMO2) cross-links involve residues lysine 236 and lysine 251. 3 CCHC-type zinc fingers span residues 238 to 255 (VTCR…NCPL), 260 to 277 (RPCC…GCPA), and 301 to 318 (KRCD…ACPE). Lysine 336 participates in a covalent cross-link: Glycyl lysine isopeptide (Lys-Gly) (interchain with G-Cter in SUMO2). The CCHC-type 4 zinc finger occupies 345 to 362 (VYCYNCAQKGHYGHECTE). The tract at residues 396-542 (LKDIKKNGDF…RKKKPKSSGF (147 aa)) is disordered. Lysine 410 participates in a covalent cross-link: Glycyl lysine isopeptide (Lys-Gly) (interchain with G-Cter in SUMO2). The segment covering 412–421 (PHGEETDRYH) has biased composition (basic and acidic residues). Positions 422-435 (HDRRKSRFSGKRSR) are enriched in basic residues. Lysine 432 participates in a covalent cross-link: Glycyl lysine isopeptide (Lys-Gly) (interchain with G-Cter in SUMO2). The segment covering 436 to 456 (WPRESKETQKEKTRGREGEKH) has biased composition (basic and acidic residues). A Glycyl lysine isopeptide (Lys-Gly) (interchain with G-Cter in SUMO2) cross-link involves residue lysine 474. Over residues 474 to 489 (KPNSSSSSNSQKPSKS) the composition is skewed to low complexity. Phosphoserine is present on residues serine 478 and serine 480. Residues lysine 485 and lysine 488 each participate in a glycyl lysine isopeptide (Lys-Gly) (interchain with G-Cter in SUMO2) cross-link. Composition is skewed to basic and acidic residues over residues 499–510 (LREEKLRRESMR) and 518–528 (FVEDGSHDDLF). Lysine 531 participates in a covalent cross-link: Glycyl lysine isopeptide (Lys-Gly) (interchain with G-Cter in SUMO2). The span at 531-542 (KQRKKKPKSSGF) shows a compositional bias: basic residues.

Component of a nucleolar TRAMP-like complex, an ATP-dependent exosome regulatory complex consisting of a helicase (MTREX), an oligadenylate polymerase (TENT4B or TENT4A), and a substrate specific RNA-binding factor (ZCCHC7 or ZCCHC8). Several TRAMP-like complexes exist with specific compositions and are associated with nuclear, or nucleolar RNA exosomes.

It is found in the nucleus. The protein resides in the nucleolus. The polypeptide is Zinc finger CCHC domain-containing protein 7 (Zcchc7) (Rattus norvegicus (Rat)).